The chain runs to 285 residues: MTNVTGDYTDCTPLLGDRAALDSFYEEHGYLFLRNVLDRDLVKTVAEQMREGLVALGAADPHATLEELTIDSFESVDEVAMHDYVKYDAFWNNPSTIKVFEQVFGEPVFVFLSTTIRYYPSQAGSEEPSFHYLTPFHQDGFYIGPNQDFRTFWIPLIRTTRESGGVALADGSHRRGKRDHVLNESFRRFGHPVRGIPPTEVSEDEHLLHSPMEPGDILLFHAHMCHKSIPNLSKDPRLMRMSMDTRVQPAKSHRGFNAMTPWTESAKDASKGIMAKITGTPTDVE.

Arginine 117 is a substrate binding site. Residues histidine 137 and aspartate 139 each contribute to the Fe cation site. 2-oxoglutarate is bound by residues 137–139 and tryptophan 153; that span reads HQD. Arginine 188 serves as a coordination point for substrate. A Fe cation-binding site is contributed by histidine 226. Residues serine 228 and arginine 240 each contribute to the 2-oxoglutarate site.

It belongs to the PhyH family. Fe cation is required as a cofactor. L-ascorbate serves as cofactor.

The catalysed reaction is 1-deoxypentalenate + 2-oxoglutarate + O2 = 1-deoxy-11beta-hydroxypentalenate + succinate + CO2. It functions in the pathway antibiotic biosynthesis; neopentalenolactone biosynthesis. Functionally, catalyzes the conversion of 1-deoxypentalenic acid to 11-beta-hydroxy-1-deoxypentalenic acid in the biosynthesis of neopentalenolactone antibiotic. This is 1-deoxypentalenic acid 11-beta-hydroxylase (ptlH) from Streptomyces avermitilis (strain ATCC 31267 / DSM 46492 / JCM 5070 / NBRC 14893 / NCIMB 12804 / NRRL 8165 / MA-4680).